The chain runs to 532 residues: Putative F-box/LRR-repeat protein At3g42770 (532 aa).

The F-box domain occupies Met-1 to Ser-46. LRR repeat units lie at residues Val-113–Ser-135, Ile-279–Met-305, and Met-398–Leu-420.

This is Putative F-box/LRR-repeat protein At3g42770 from Arabidopsis thaliana (Mouse-ear cress).